The primary structure comprises 309 residues: NADH-quinone oxidoreductase subunit C (309 aa).

A disordered region spans residues 198 to 309 (LPGDEKAVPP…RTRKKKEDGE (112 aa)). Positions 220–230 (TKGDAKADVPK) are enriched in basic and acidic residues. Residues 246-261 (DAAAKPVAEAAAPAAT) show a composition bias toward low complexity.

Belongs to the complex I 30 kDa subunit family. NDH-1 is composed of 14 different subunits. Subunits NuoB, C, D, E, F, and G constitute the peripheral sector of the complex.

The protein localises to the cell inner membrane. The enzyme catalyses a quinone + NADH + 5 H(+)(in) = a quinol + NAD(+) + 4 H(+)(out). Functionally, NDH-1 shuttles electrons from NADH, via FMN and iron-sulfur (Fe-S) centers, to quinones in the respiratory chain. The immediate electron acceptor for the enzyme in this species is believed to be ubiquinone. Couples the redox reaction to proton translocation (for every two electrons transferred, four hydrogen ions are translocated across the cytoplasmic membrane), and thus conserves the redox energy in a proton gradient. The polypeptide is NADH-quinone oxidoreductase subunit C (Novosphingobium aromaticivorans (strain ATCC 700278 / DSM 12444 / CCUG 56034 / CIP 105152 / NBRC 16084 / F199)).